The following is a 128-amino-acid chain: uncharacterized protein (128 aa).

This is an uncharacterized protein from Borreliella burgdorferi (strain ATCC 35210 / DSM 4680 / CIP 102532 / B31) (Borrelia burgdorferi).